An 888-amino-acid polypeptide reads, in one-letter code: Protein translocase subunit SecA (888 aa).

Residues Q81, 99–103 (GEGKT), and D489 contribute to the ATP site.

It belongs to the SecA family.

It is found in the plastid. It localises to the chloroplast stroma. Its subcellular location is the chloroplast thylakoid membrane. It carries out the reaction ATP + H2O + cellular proteinSide 1 = ADP + phosphate + cellular proteinSide 2.. Has a central role in coupling the hydrolysis of ATP to the transfer of proteins across the thylakoid membrane. This is Protein translocase subunit SecA from Trieres chinensis (Marine centric diatom).